Reading from the N-terminus, the 604-residue chain is Transcriptional repressor rco-1 (604 aa).

Disordered regions lie at residues 87–110 (RGGA…PAIG) and 124–264 (GGQA…DRLP). The span at 144-163 (MPAPPGLQGPPPPPPPPSQQ) shows a compositional bias: pro residues. Low complexity-rich tracts occupy residues 164 to 177 (PPFQ…QGPG) and 190 to 209 (PGPA…PATP). A compositionally biased stretch (polar residues) spans 210 to 229 (QINTPIPYNGGPAQSPQVPT). 7 WD repeats span residues 295-324 (QHES…QIYD), 342-372 (TGDL…RVWD), 384-414 (GHEQ…RLWD), 425-455 (SIED…RVWD), 469-499 (GHKD…KMWE), 523-553 (GHRD…QFWD), and 565-600 (GHKN…RIWS).

In terms of biological role, represses transcription by RNA polymerase II. May be involved at several stages of conidiation and other growth and development processes. Appears to regulate genes that are expressed in asexual and sexual spore pathways. The sequence is that of Transcriptional repressor rco-1 (rco-1) from Neurospora crassa (strain ATCC 24698 / 74-OR23-1A / CBS 708.71 / DSM 1257 / FGSC 987).